A 243-amino-acid chain; its full sequence is Pyridoxine 5'-phosphate synthase (243 aa).

Asn9 is a binding site for 3-amino-2-oxopropyl phosphate. Position 11–12 (11–12 (DH)) interacts with 1-deoxy-D-xylulose 5-phosphate. Arg20 contributes to the 3-amino-2-oxopropyl phosphate binding site. His45 serves as the catalytic Proton acceptor. 1-deoxy-D-xylulose 5-phosphate is bound by residues Arg47 and His52. Catalysis depends on Glu72, which acts as the Proton acceptor. Residue Thr102 coordinates 1-deoxy-D-xylulose 5-phosphate. Catalysis depends on His193, which acts as the Proton donor. 3-amino-2-oxopropyl phosphate contacts are provided by residues Gly194 and 215-216 (GH).

Belongs to the PNP synthase family. As to quaternary structure, homooctamer; tetramer of dimers.

The protein resides in the cytoplasm. It catalyses the reaction 3-amino-2-oxopropyl phosphate + 1-deoxy-D-xylulose 5-phosphate = pyridoxine 5'-phosphate + phosphate + 2 H2O + H(+). It participates in cofactor biosynthesis; pyridoxine 5'-phosphate biosynthesis; pyridoxine 5'-phosphate from D-erythrose 4-phosphate: step 5/5. Catalyzes the complicated ring closure reaction between the two acyclic compounds 1-deoxy-D-xylulose-5-phosphate (DXP) and 3-amino-2-oxopropyl phosphate (1-amino-acetone-3-phosphate or AAP) to form pyridoxine 5'-phosphate (PNP) and inorganic phosphate. This chain is Pyridoxine 5'-phosphate synthase, found in Photorhabdus laumondii subsp. laumondii (strain DSM 15139 / CIP 105565 / TT01) (Photorhabdus luminescens subsp. laumondii).